The chain runs to 626 residues: Chaperone protein DnaK (626 aa).

At threonine 197 the chain carries Phosphothreonine; by autocatalysis. Composition is skewed to basic and acidic residues over residues 512-528 (DAEAHKEDDKKRKEAVE) and 539-551 (QTEKSLSEMGEKI). Disordered regions lie at residues 512–551 (DAEAHKEDDKKRKEAVEARNAADSLAHQTEKSLSEMGEKI) and 601–626 (DQNAGAADGGAEKKKKDDDVIDAEVE).

The protein belongs to the heat shock protein 70 family.

Functionally, acts as a chaperone. The chain is Chaperone protein DnaK from Campylobacter fetus subsp. fetus (strain 82-40).